We begin with the raw amino-acid sequence, 371 residues long: Lysine racemase (371 aa).

Lys-39 acts as the Proton acceptor in catalysis. Lys-39 is subject to N6-(pyridoxal phosphate)lysine. Position 135 (Arg-135) interacts with substrate. Tyr-266 (proton acceptor) is an active-site residue. Met-313 serves as a coordination point for substrate.

Belongs to the alanine racemase family. In terms of assembly, homodimer. Pyridoxal 5'-phosphate serves as cofactor.

It carries out the reaction L-lysine = D-lysine. In terms of biological role, catalyzes the interconversion of D-lysine and L-lysine. Can also use arginine and ornithine, but not alanine. This Oenococcus oeni (strain ATCC BAA-331 / PSU-1) protein is Lysine racemase.